The sequence spans 313 residues: UbiA prenyltransferase claS (313 aa).

Transmembrane regions (helical) follow at residues 30 to 52 and 57 to 79; these read FAGTMVLFWPFAWGLTMAARALL and TFGTILACGFFASCLLHSAGCIW. An NDxxDxxxD motif is present at residues 81 to 88; that stretch reads DILDQDFD. Asp84 and Asp88 together coordinate Mg(2+). The next 3 membrane-spanning stretches (helical) occupy residues 99–121, 131–148, and 155–177; these read IASGAISNTGALIFMFAHLFILM, AWMIGIISIFPLPGIYPL, and WPQAWLGIALNTGIVMAWAYTTG. Residues Asp205 and Asp209 each coordinate Mg(2+). A DxxxD motif is present at residues 205-209; sequence DKKDD. The short motif at 205–209 is the YxxxK element; sequence DKKDD. 3 helical membrane passes run 227 to 247, 250 to 270, and 293 to 313; these read PVLSLFGSIIVGSLLISGILN, ELPYFLVSVGGGGLHLATQLW, and AIVWAGLLLDYAWAVGVGAIM.

This sequence belongs to the UbiA prenyltransferase family. It depends on Mg(2+) as a cofactor.

The protein localises to the membrane. The catalysed reaction is hydroquinone + (2E)-geranyl diphosphate = (2E)-geranylhydroquinone + diphosphate. Its pathway is secondary metabolite biosynthesis; terpenoid biosynthesis. Its function is as follows. Prenyltransferase; part of the gene cluster that mediates the biosynthesis of clavilactone A, a meroterpenoid that features a unique benzo-fused ten-membered carbocyclic ring unit with an alpha,beta-epoxy-gamma-lactone moiety, forming an intriguing 10/5/3 tricyclic nested skeleton. ClaR, ClaS and ClaT are sufficient to produce clavilactone A. Within the pathway, claS acts as an atypical UbiA prenyltransferase that transfers geranyl pyrophosphate (GPP) to hydroquinone (HYQ) instead of p-hydroxybenzoic acid (PHB), producing the first intermediate geranylhydroquinone. The cytochrome P450 monooxygenase claR then catalyzes the diradical coupling reaction between the intramolecular hydroquinone and allyl moieties to form the benzo-fused ten-membered carbocyclic ring unit of wigantol. Finally the cytochrome P450 monooxygenase claT exquisitely and stereoselectively assembles the alpha,beta-epoxy-gamma-lactone moiety, producing clavilactone A via arnebinol A. The protein is UbiA prenyltransferase claS of Ampulloclitocybe clavipes (Club foot).